The primary structure comprises 512 residues: Centrosomal protein CCDC61 (512 aa).

M1 is subject to N-acetylmethionine. Positions 1 to 142 are head domain; the sequence is MEQPAGLQVD…PLPLPYQGKP (142 aa). Coiled coils occupy residues 176-203 and 246-273; these read WHLREQVTRLASEKRELEAQLGRSREEA and RRLAKELEEVKASERNLRARLKTLNCEL. Position 282 is a phosphothreonine (T282). 2 disordered regions span residues 282 to 415 and 430 to 472; these read TLPA…SFRS and SQSV…HLAS. Residues 287 to 300 are compositionally biased toward basic and acidic residues; it reads AREDRALSSRERST. Phosphoserine occurs at positions 328, 330, 372, and 375. The span at 406–415 shows a compositional bias: low complexity; the sequence is RSSSVDSFRS. A phosphoserine mark is found at S447 and S473.

Belongs to the CCDC61 family. In terms of assembly, forms homodimers (via head domain). Interacts with CEP170. Interacts with PCM1 and CEP131. Binds tubulin.

The protein resides in the cytoplasm. The protein localises to the cytoskeleton. It is found in the microtubule organizing center. Its subcellular location is the centrosome. It localises to the centriolar satellite. The protein resides in the cilium basal body. In terms of biological role, microtubule-binding centrosomal protein required for centriole cohesion, independently of the centrosome-associated protein/CEP250 and rootletin/CROCC linker. In interphase, required for anchoring microtubule at the mother centriole subdistal appendages and for centrosome positioning. During mitosis, may be involved in spindle assembly and chromatin alignment by regulating the organization of spindle microtubules into a symmetrical structure. Plays a non-essential role in ciliogenesis. This is Centrosomal protein CCDC61 from Rattus norvegicus (Rat).